A 676-amino-acid chain; its full sequence is Probable metal-nicotianamine transporter YSL6 (676 aa).

Transmembrane regions (helical) follow at residues 38–58, 62–82, 110–130, 154–174, 276–296, 321–341, 392–412, 413–433, 452–472, 510–530, 561–581, 604–624, and 639–659; these read ITIRGLTVSALLGTLFCIITH, LTVGIIPSLNVAAGLLGFFFV, CVVACYGLAFSGGFGSYLIAM, GLWWMIGFLFVVSFLGLFSLV, IVNCSVLLGAIISWGILWPFV, VFIAIAIILGDGLYNLVKIIA, FAIAGYVGLAAISTATIPIIF, PPLKWYFVLCSYFIAPALAFC, IGLFIIASVVGSDGGVIAGLA, VGTAMGCVIAPLTFWLFWTAF, LPKHCLALCYGFFIAALIVNL, FYIGAYFAIDMFVGTVILFVW, and VASGLICGDGIWTIPSAILSI.

The protein belongs to the YSL (TC 2.A.67.2) family.

Its subcellular location is the membrane. Functionally, may be involved in the transport of nicotianamine-chelated metals. This Arabidopsis thaliana (Mouse-ear cress) protein is Probable metal-nicotianamine transporter YSL6 (YSL6).